Reading from the N-terminus, the 164-residue chain is MIFLDNRQDKIEVTDKLEKIVTSSIECALKEEKVNFPCEISVVFVDNENIKDINRENRNIDRVTDVLSFPMLEYPESKVFKEVYLNYKFPEYDMNDGNLVLGDIVVSLEKCEEQSREFGHSFFRETCYLIVHSVLHLLGYDHTEDSDKKIMREREEYILKKAKL.

Positions 132, 136, and 142 each coordinate Zn(2+).

Belongs to the endoribonuclease YbeY family. It depends on Zn(2+) as a cofactor.

Its subcellular location is the cytoplasm. Its function is as follows. Single strand-specific metallo-endoribonuclease involved in late-stage 70S ribosome quality control and in maturation of the 3' terminus of the 16S rRNA. The chain is Endoribonuclease YbeY from Clostridium kluyveri (strain NBRC 12016).